Consider the following 911-residue polypeptide: Protein translocase subunit SecA (911 aa).

ATP is bound by residues Q87, 105-109 (GEGKT), and D512. Basic and acidic residues predominate over residues 561–571 (RHESRRIDNQL). Residues 561–583 (RHESRRIDNQLRGRSGRQGDPGS) are disordered. Positions 895, 897, 906, and 907 each coordinate Zn(2+).

It belongs to the SecA family. In terms of assembly, monomer and homodimer. Part of the essential Sec protein translocation apparatus which comprises SecA, SecYEG and auxiliary proteins SecDF-YajC and YidC. It depends on Zn(2+) as a cofactor.

The protein resides in the cell inner membrane. Its subcellular location is the cytoplasm. The catalysed reaction is ATP + H2O + cellular proteinSide 1 = ADP + phosphate + cellular proteinSide 2.. Its function is as follows. Part of the Sec protein translocase complex. Interacts with the SecYEG preprotein conducting channel. Has a central role in coupling the hydrolysis of ATP to the transfer of proteins into and across the cell membrane, serving both as a receptor for the preprotein-SecB complex and as an ATP-driven molecular motor driving the stepwise translocation of polypeptide chains across the membrane. This Pseudomonas putida (strain W619) protein is Protein translocase subunit SecA.